Here is a 136-residue protein sequence, read N- to C-terminus: Histone H3.3C (136 aa).

The segment covering methionine 1–lysine 10 has biased composition (polar residues). Positions methionine 1 to proline 39 are disordered. Arginine 3 is modified (asymmetric dimethylarginine; by PRMT6). A Phosphothreonine; by HASPIN modification is found at threonine 4. Lysine 5 bears the Allysine; alternate mark. At lysine 5 the chain carries N6,N6,N6-trimethyllysine; alternate. Position 5 is an N6,N6-dimethyllysine; alternate (lysine 5). Lysine 5 is subject to N6-(2-hydroxyisobutyryl)lysine; alternate. Lysine 5 carries the N6-acetyllysine; alternate modification. The residue at position 5 (lysine 5) is an N6-methyllysine; alternate. At glutamine 6 the chain carries 5-glutamyl dopamine; alternate. Position 6 is a 5-glutamyl serotonin; alternate (glutamine 6). Threonine 7 carries the phosphothreonine; by PKC modification. N6-(2-hydroxyisobutyryl)lysine; alternate is present on lysine 10. Position 10 is an N6-lactoyllysine; alternate (lysine 10). Lysine 10 is subject to N6-methylated lysine. Residue serine 11 is modified to ADP-ribosylserine; alternate. At serine 11 the chain carries Phosphoserine; alternate; by AURKB, AURKC, RPS6KA3, RPS6KA4 and RPS6KA5. At threonine 12 the chain carries Phosphothreonine; by PKC. Lysine 15 is modified (N6-(2-hydroxyisobutyryl)lysine; alternate). An N6-lactoyllysine; alternate modification is found at lysine 15. Lysine 15 carries the N6-acetyllysine modification. Residue lysine 15 is modified to N6-glutaryllysine; alternate. Arginine 18 carries the asymmetric dimethylarginine modification. Lysine 19, lysine 24, and lysine 28 each carry N6-(2-hydroxyisobutyryl)lysine; alternate. The residue at position 19 (lysine 19) is an N6-acetyllysine; alternate. Lysine 19, lysine 24, and lysine 28 each carry N6-lactoyllysine; alternate. N6-glutaryllysine; alternate occurs at positions 19, 24, and 28. 2 positions are modified to N6-butyryllysine; alternate: lysine 19 and lysine 24. Residue lysine 19 is modified to N6-methylated lysine; alternate. Lysine 24 is subject to N6-acetyllysine. Lysine 28 bears the N6-acetyllysine; alternate mark. N6-methylated lysine; alternate is present on lysine 28. Serine 29 carries the post-translational modification ADP-ribosylserine; alternate. Serine 29 is subject to Phosphoserine; alternate; by AURKB, AURKC and RPS6KA5. Position 37 is an N6-(2-hydroxyisobutyryl)lysine; alternate (lysine 37). Residue lysine 37 is modified to N6-acetyllysine; alternate. N6-methylated lysine; alternate is present on lysine 37. Tyrosine 42 carries the post-translational modification Phosphotyrosine. Lysine 57 bears the N6-(2-hydroxyisobutyryl)lysine; alternate mark. Lysine 57 is modified (N6-lactoyllysine; alternate). Lysine 57 bears the N6-glutaryllysine; alternate mark. At lysine 57 the chain carries N6-succinyllysine; alternate. A Phosphoserine modification is found at serine 58. 2 positions are modified to N6-(2-hydroxyisobutyryl)lysine; alternate: lysine 65 and lysine 80. N6-methylated lysine is present on residues lysine 65 and lysine 80. An N6-lactoyllysine; alternate modification is found at lysine 80. Lysine 80 bears the N6-glutaryllysine; alternate mark. Lysine 80 is subject to N6-succinyllysine; alternate. Residue threonine 81 is modified to Phosphothreonine. 2 positions are modified to N6-acetyllysine; alternate: lysine 116 and lysine 123. N6-glutaryllysine; alternate occurs at positions 116 and 123. An N6-(2-hydroxyisobutyryl)lysine; alternate modification is found at lysine 123. The residue at position 123 (lysine 123) is an N6-methylated lysine; alternate. Position 123 is an N6-succinyllysine; alternate (lysine 123).

The protein belongs to the histone H3 family. In terms of assembly, the nucleosome is a histone octamer containing two molecules each of H2A, H2B, H3 and H4 assembled in one H3-H4 heterotetramer and two H2A-H2B heterodimers. The octamer wraps approximately 147 bp of DNA. Post-translationally, acetylation is generally linked to gene activation. Acetylation on Lys-19 (H3K18ac) and Lys-24 (H3K24ac) favors methylation at Arg-18 (H3R17me). Acetylation at Lys-123 (H3K122ac) by EP300/p300 plays a central role in chromatin structure: localizes at the surface of the histone octamer and stimulates transcription, possibly by promoting nucleosome instability. Asymmetric dimethylation at Arg-18 (H3R17me2a) is linked to gene activation. Asymmetric dimethylation at Arg-3 (H3R2me2a) by PRMT6 is linked to gene repression and is mutually exclusive with H3 Lys-5 methylation (H3K4me2 and H3K4me3). H3R2me2a is present at the 3' of genes regardless of their transcription state and is enriched on inactive promoters, while it is absent on active promoters. In terms of processing, methylation at Lys-5 (H3K4me) and Lys-80 (H3K79me) are linked to gene activation. Methylation at Lys-5 (H3K4me) facilitates subsequent acetylation of H3 and H4. Methylation at Lys-80 (H3K79me) is associated with DNA double-strand break (DSB) responses and is a specific target for TP53BP1. Methylation at Lys-10 (H3K9me) and Lys-28 (H3K27me) are linked to gene repression. Methylation at Lys-10 (H3K9me) is a specific target for HP1 proteins (CBX1, CBX3 and CBX5) and prevents subsequent phosphorylation at Ser-11 (H3S10ph) and acetylation of H3 and H4. Methylation at Lys-5 (H3K4me) and Lys-80 (H3K79me) require preliminary monoubiquitination of H2B at 'Lys-120'. Post-translationally, phosphorylated at Thr-4 (H3T3ph) by HASPIN during prophase and dephosphorylated during anaphase. Phosphorylation at Ser-11 (H3S10ph) by AURKB is crucial for chromosome condensation and cell-cycle progression during mitosis and meiosis. In addition phosphorylation at Ser-11 (H3S10ph) by RPS6KA4 and RPS6KA5 is important during interphase because it enables the transcription of genes following external stimulation, like mitogens, stress, growth factors or UV irradiation and result in the activation of genes, such as c-fos and c-jun. Phosphorylation at Ser-11 (H3S10ph), which is linked to gene activation, prevents methylation at Lys-10 (H3K9me) but facilitates acetylation of H3 and H4. Phosphorylation at Ser-11 (H3S10ph) by AURKB mediates the dissociation of HP1 proteins (CBX1, CBX3 and CBX5) from heterochromatin. Phosphorylation at Ser-11 (H3S10ph) is also an essential regulatory mechanism for neoplastic cell transformation. Phosphorylated at Ser-29 (H3S28ph) by MAP3K20 isoform 1, RPS6KA5 or AURKB during mitosis or upon ultraviolet B irradiation. Phosphorylation at Thr-7 (H3T6ph) by PRKCB is a specific tag for epigenetic transcriptional activation that prevents demethylation of Lys-5 (H3K4me) by LSD1/KDM1A. At centromeres, specifically phosphorylated at Thr-12 (H3T11ph) from prophase to early anaphase, by DAPK3 and PKN1. Phosphorylation at Thr-12 (H3T11ph) by PKN1 or isoform M2 of PKM (PKM2) is a specific tag for epigenetic transcriptional activation that promotes demethylation of Lys-10 (H3K9me) by KDM4C/JMJD2C. Phosphorylation at Tyr-42 (H3Y41ph) by JAK2 promotes exclusion of CBX5 (HP1 alpha) from chromatin. Lysine deamination at Lys-5 (H3K4all) to form allysine only takes place on H3K4me3 and results in gene repression. In terms of processing, butyrylation of histones marks active promoters and competes with histone acetylation. It is present during late spermatogenesis. Post-translationally, succinylation at Lys-80 (H3K79succ) by KAT2A takes place with a maximum frequency around the transcription start sites of genes. It gives a specific tag for epigenetic transcription activation. Desuccinylation at Lys-123 (H3K122succ) by SIRT7 in response to DNA damage promotes chromatin condensation and double-strand breaks (DSBs) repair. Serine ADP-ribosylation constitutes the primary form of ADP-ribosylation of proteins in response to DNA damage. Serine ADP-ribosylation at Ser-11 (H3S10ADPr) is mutually exclusive with phosphorylation at Ser-11 (H3S10ph) and impairs acetylation at Lys-10 (H3K9ac).

The protein localises to the nucleus. It is found in the chromosome. In terms of biological role, core component of nucleosome. Nucleosomes wrap and compact DNA into chromatin, limiting DNA accessibility to the cellular machineries which require DNA as a template. Histones thereby play a central role in transcription regulation, DNA repair, DNA replication and chromosomal stability. DNA accessibility is regulated via a complex set of post-translational modifications of histones, also called histone code, and nucleosome remodeling. The protein is Histone H3.3C of Cairina moschata (Muscovy duck).